We begin with the raw amino-acid sequence, 203 residues long: Peptidyl-tRNA hydrolase (203 aa).

Residue Tyr-14 participates in tRNA binding. The active-site Proton acceptor is His-19. Residues Tyr-64, Asn-66, and Asn-112 each contribute to the tRNA site.

This sequence belongs to the PTH family. Monomer.

It is found in the cytoplasm. It catalyses the reaction an N-acyl-L-alpha-aminoacyl-tRNA + H2O = an N-acyl-L-amino acid + a tRNA + H(+). Hydrolyzes ribosome-free peptidyl-tRNAs (with 1 or more amino acids incorporated), which drop off the ribosome during protein synthesis, or as a result of ribosome stalling. Its function is as follows. Catalyzes the release of premature peptidyl moieties from peptidyl-tRNA molecules trapped in stalled 50S ribosomal subunits, and thus maintains levels of free tRNAs and 50S ribosomes. The sequence is that of Peptidyl-tRNA hydrolase from Methylobacterium nodulans (strain LMG 21967 / CNCM I-2342 / ORS 2060).